Consider the following 63-residue polypeptide: Small ribosomal subunit protein eS17 (63 aa).

Belongs to the eukaryotic ribosomal protein eS17 family.

The protein is Small ribosomal subunit protein eS17 of Methanosphaerula palustris (strain ATCC BAA-1556 / DSM 19958 / E1-9c).